The sequence spans 265 residues: Glutamate racemase (265 aa).

Substrate contacts are provided by residues 7 to 8 (DS) and 39 to 40 (YG). The active-site Proton donor/acceptor is the Cys-70. 71–72 (NT) contacts substrate. Cys-177 serves as the catalytic Proton donor/acceptor.

It belongs to the aspartate/glutamate racemases family.

It catalyses the reaction L-glutamate = D-glutamate. Its pathway is cell wall biogenesis; peptidoglycan biosynthesis. Functionally, provides the (R)-glutamate required for cell wall biosynthesis. The polypeptide is Glutamate racemase (Prochlorococcus marinus (strain NATL2A)).